Reading from the N-terminus, the 250-residue chain is Type III pantothenate kinase (250 aa).

Residue 6 to 13 (DVGNTNTV) coordinates ATP. Position 103-106 (103-106 (GADR)) interacts with substrate. Aspartate 105 functions as the Proton acceptor in the catalytic mechanism. Aspartate 125 is a K(+) binding site. Threonine 128 contacts ATP. Threonine 180 contributes to the substrate binding site.

Belongs to the type III pantothenate kinase family. As to quaternary structure, homodimer. It depends on NH4(+) as a cofactor. The cofactor is K(+).

Its subcellular location is the cytoplasm. The catalysed reaction is (R)-pantothenate + ATP = (R)-4'-phosphopantothenate + ADP + H(+). It participates in cofactor biosynthesis; coenzyme A biosynthesis; CoA from (R)-pantothenate: step 1/5. In terms of biological role, catalyzes the phosphorylation of pantothenate (Pan), the first step in CoA biosynthesis. The sequence is that of Type III pantothenate kinase from Frankia alni (strain DSM 45986 / CECT 9034 / ACN14a).